A 472-amino-acid polypeptide reads, in one-letter code: Sodium-coupled neutral amino acid transporter 5 (472 aa).

At methionine 1 the chain carries N-acetylmethionine. Residues 1–48 are Cytoplasmic-facing; it reads MELQDPKMNGALPSDAVGYRQEREGFLPSRGPAPGSKPVQFMDFEGKT. A helical membrane pass occupies residues 49-71; it reads SFGMSVFNLSNAIMGSGILGLAY. Topologically, residues 72–87 are extracellular; sequence AMAHTGVIFFLALLLC. Residues 88–108 traverse the membrane as a helical segment; sequence IALLSSYSIHLLLTCAGIAGI. The Cytoplasmic segment spans residues 109–125; it reads RAYEQLGQRAFGPAGKV. The chain crosses the membrane as a helical span at residues 126–146; the sequence is VVATVICLHNVGAMSSYLFII. Over 147–166 the chain is Extracellular; it reads KSELPLVIGTFLYMDPEGDW. Residues 167 to 187 traverse the membrane as a helical segment; it reads FLKGNLLIIIVSVLIILPLAL. Over 188–192 the chain is Cytoplasmic; sequence MKHLG. The chain crosses the membrane as a helical span at residues 193–213; it reads YLGYTSGLSLTCMLFFLVSVI. The Extracellular segment spans residues 214-257; that stretch reads YKKFQLGCAIGHNETAMESEALVGLPSQGLNSSCEAQMFTVDSQ. A disulfide bridge connects residues cysteine 221 and cysteine 247. Residue asparagine 226 is glycosylated (N-linked (GlcNAc...) asparagine). A helical membrane pass occupies residues 258–278; it reads MSYTVPIMAFAFVCHPEVLPI. At 279–295 the chain is on the cytoplasmic side; sequence YTELCRPSKRRMQAVAN. The helical transmembrane segment at 296–316 threads the bilayer; sequence VSIGAMFCMYGLTATFGYLTF. Residues 317–334 lie on the Extracellular side of the membrane; that stretch reads YSSVKAEMLHMYSQKDPL. Residues 335–355 form a helical membrane-spanning segment; it reads ILCVRLAVLLAVTLTVPVVLF. Residues 356–376 are Cytoplasmic-facing; the sequence is PIRRALQQLLFPGKAFSWPRH. Residues 377–397 traverse the membrane as a helical segment; that stretch reads VAIALILLVLVNVLVICVPTI. The Extracellular portion of the chain corresponds to 398-399; it reads RD. Residues 400-420 traverse the membrane as a helical segment; the sequence is IFGVIGSTSAPSLIFILPSIF. Topologically, residues 421–439 are cytoplasmic; it reads YLRIVPSEVEPFLSWPKIQ. A helical transmembrane segment spans residues 440 to 460; sequence ALCFGVLGVLFMAVSLGFMFA. The Extracellular portion of the chain corresponds to 461–472; it reads NWATGQSRMSGH.

This sequence belongs to the amino acid/polyamine transporter 2 family. Predominantly expressed in stomach, brain, liver, lung and intestinal tract.

The protein resides in the cell membrane. It carries out the reaction L-serine(out) + Na(+)(out) + H(+)(in) = L-serine(in) + Na(+)(in) + H(+)(out). The enzyme catalyses L-alanine(out) + Na(+)(out) + H(+)(in) = L-alanine(in) + Na(+)(in) + H(+)(out). It catalyses the reaction glycine(out) + Na(+)(out) + H(+)(in) = glycine(in) + Na(+)(in) + H(+)(out). The catalysed reaction is L-glutamine(out) + Na(+)(out) + H(+)(in) = L-glutamine(in) + Na(+)(in) + H(+)(out). It carries out the reaction L-asparagine(out) + Na(+)(out) + H(+)(in) = L-asparagine(in) + Na(+)(in) + H(+)(out). The enzyme catalyses L-histidine(out) + Na(+)(out) + H(+)(in) = L-histidine(in) + Na(+)(in) + H(+)(out). It catalyses the reaction L-cysteine(out) + Na(+)(out) + H(+)(in) = L-cysteine(in) + Na(+)(in) + H(+)(out). Not inhibited by lithium. Partial allosteric regulation on ions sodium binding. Functionally, symporter that cotransports neutral amino acids and sodium ions, coupled to an H(+) antiporter activity. Releases L-glutamine and glycine from astroglial cells and may participate in the glutamate/GABA-L-glutamine cycle and the NMDA receptors activation. In addition, contributes significantly to L-glutamine uptake in retina, namely in ganglion and Mueller cells therefore, participates in the retinal glutamate-glutamine cycle. The transport activity is pH sensitive and Li(+) tolerant. Moreover functions in both direction and is associated with large uncoupled fluxes of protons. The transport is electroneutral coupled to the cotransport of 1 Na(+) and the antiport of 1 H(+). May have a particular importance for modulation of net hepatic glutamine flux. The chain is Sodium-coupled neutral amino acid transporter 5 (SLC38A5) from Homo sapiens (Human).